The following is a 190-amino-acid chain: Pyridoxamine 5'-phosphate oxidase C1952.08c homolog (190 aa).

2 residues coordinate FMN: serine 62 and lysine 69.

Belongs to the pyridoxamine 5'-phosphate oxidase family. The cofactor is FMN.

It is found in the cytoplasm. The protein localises to the nucleus. This chain is Pyridoxamine 5'-phosphate oxidase C1952.08c homolog, found in Schizosaccharomyces pombe (strain 972 / ATCC 24843) (Fission yeast).